The following is a 148-amino-acid chain: Large ribosomal subunit protein bL19 (148 aa).

This sequence belongs to the bacterial ribosomal protein bL19 family.

Functionally, this protein is located at the 30S-50S ribosomal subunit interface and may play a role in the structure and function of the aminoacyl-tRNA binding site. This chain is Large ribosomal subunit protein bL19, found in Beijerinckia indica subsp. indica (strain ATCC 9039 / DSM 1715 / NCIMB 8712).